A 390-amino-acid polypeptide reads, in one-letter code: Cell division protein FtsZ (390 aa).

GTP contacts are provided by residues glycine 20–asparagine 24, glycine 106–glycine 108, glutamate 137, arginine 141, and aspartate 184.

The protein belongs to the FtsZ family. Homodimer. Polymerizes to form a dynamic ring structure in a strictly GTP-dependent manner. Interacts directly with several other division proteins.

The protein resides in the cytoplasm. Essential cell division protein that forms a contractile ring structure (Z ring) at the future cell division site. The regulation of the ring assembly controls the timing and the location of cell division. One of the functions of the FtsZ ring is to recruit other cell division proteins to the septum to produce a new cell wall between the dividing cells. Binds GTP and shows GTPase activity. The sequence is that of Cell division protein FtsZ from Mycoplasmopsis pulmonis (strain UAB CTIP) (Mycoplasma pulmonis).